We begin with the raw amino-acid sequence, 206 residues long: dTTP/UTP pyrophosphatase (206 aa).

D79 serves as the catalytic Proton acceptor.

The protein belongs to the Maf family. YhdE subfamily. A divalent metal cation serves as cofactor.

Its subcellular location is the cytoplasm. It carries out the reaction dTTP + H2O = dTMP + diphosphate + H(+). The catalysed reaction is UTP + H2O = UMP + diphosphate + H(+). Nucleoside triphosphate pyrophosphatase that hydrolyzes dTTP and UTP. May have a dual role in cell division arrest and in preventing the incorporation of modified nucleotides into cellular nucleic acids. The polypeptide is dTTP/UTP pyrophosphatase (Rhizobium meliloti (strain 1021) (Ensifer meliloti)).